Consider the following 459-residue polypeptide: Probable 1,4-beta-D-glucan cellobiohydrolase C (459 aa).

The signal sequence occupies residues 1–18 (MHYPLSLALAFLPFGIQA). The CBM1 domain occupies 19–54 (QQTLWGQCGGQGYSGATSCVAGATCATVNEYYAQCT). 2 disulfide bridges follow: Cys26-Cys43 and Cys37-Cys53. A thr-rich linker region spans residues 54–94 (TPAAGTSSATTLKTTTSSTTAAVTTTTTTQSPTGSASPTTT). The tract at residues 76–97 (VTTTTTTQSPTGSASPTTTASA) is disordered. The interval 95–459 (ASASGNPFSG…QLLTNANPAF (365 aa)) is catalytic. Asp189 is an active-site residue. An intrachain disulfide couples Cys190 to Cys249. Asp235 functions as the Proton donor in the catalytic mechanism. An N-linked (GlcNAc...) asparagine glycan is attached at Asn303. Residues Cys381 and Cys428 are joined by a disulfide bond. Asp414 serves as the catalytic Nucleophile.

The protein belongs to the glycosyl hydrolase 6 (cellulase B) family.

Its subcellular location is the secreted. It carries out the reaction Hydrolysis of (1-&gt;4)-beta-D-glucosidic linkages in cellulose and cellotetraose, releasing cellobiose from the non-reducing ends of the chains.. Functionally, the biological conversion of cellulose to glucose generally requires three types of hydrolytic enzymes: (1) Endoglucanases which cut internal beta-1,4-glucosidic bonds; (2) Exocellobiohydrolases that cut the disaccharide cellobiose from the non-reducing end of the cellulose polymer chain; (3) Beta-1,4-glucosidases which hydrolyze the cellobiose and other short cello-oligosaccharides to glucose. This Aspergillus niger (strain ATCC MYA-4892 / CBS 513.88 / FGSC A1513) protein is Probable 1,4-beta-D-glucan cellobiohydrolase C (cbhC).